A 514-amino-acid polypeptide reads, in one-letter code: CENP-B homolog protein 1 (514 aa).

In terms of domain architecture, HTH CENPB-type spans 69–144 (DIKKIRAPKF…RRRHYIQQSA (76 aa)).

It is found in the nucleus. Its subcellular location is the chromosome. The protein localises to the centromere. In terms of biological role, binds to centromeric K-type repeat DNA and ARS3002 DNA. The CBH-binding consensus sequence is Py-Pu-A-T-A-T-Py-Pu-T-A. The protein is CENP-B homolog protein 1 (cbh1) of Schizosaccharomyces pombe (strain 972 / ATCC 24843) (Fission yeast).